Reading from the N-terminus, the 526-residue chain is Protein DETOXIFICATION 43 (526 aa).

The Cytoplasmic portion of the chain corresponds to 1–36 (MTETGDDLATVKKPIPFLVIFKDLRHVFSRDTTGRE). A helical membrane pass occupies residues 37-57 (ILGIAFPAALALAADPIASLI). Residues 58 to 59 (DT) are Extracellular-facing. A helical transmembrane segment spans residues 60–80 (AFVGRLGAVQLAAVGVSIAIF). Topologically, residues 81–170 (NQASRITIFP…NKKEKRTIRT (90 aa)) are cytoplasmic. Residues 133-166 (ISSPTSNDTNQPQQPPAPDTKSNSGNKSNKKEKR) are disordered. A compositionally biased stretch (polar residues) spans 134 to 144 (SSPTSNDTNQP). A helical transmembrane segment spans residues 171-191 (ASTAMILGLILGLVQAIFLIF). The Extracellular segment spans residues 192 to 215 (SSKLLLGVMGVKPNSPMLSPAHKY). Residues 216 to 236 (LSIRALGAPALLLSLAMQGIF) traverse the membrane as a helical segment. The Cytoplasmic portion of the chain corresponds to 237-244 (RGFKDTKT). A helical transmembrane segment spans residues 245–267 (PLFATVVADVINIVLDPIFIFVL). The Extracellular segment spans residues 268–270 (RLG). A helical transmembrane segment spans residues 271–293 (IIGAAIAHVISQYFMTLILFVFL). The Cytoplasmic segment spans residues 294–316 (AKKVNLIPPNFGDLQFGRFLKNG). Residues 317–337 (LLLLARTIAVTFCQTLAAAMA) form a helical membrane-spanning segment. Over 338-353 (ARLGTTPMAAFQICLQ) the chain is Extracellular. The chain crosses the membrane as a helical span at residues 354–374 (VWLTSSLLNDGLAVAGQAILA). Residues 375–396 (CSFAEKDYNKVTAVASRVLQMG) are Cytoplasmic-facing. The chain crosses the membrane as a helical span at residues 397 to 417 (FVLGLGLSVFVGLGLYFGAGV). Residues 418–426 (FSKDPAVIH) are Extracellular-facing. The chain crosses the membrane as a helical span at residues 427–447 (LMAIGIPFIAATQPINSLAFV). The Cytoplasmic segment spans residues 448–457 (LDGVNFGASD). Residues 458-478 (FAYTAYSMVGVAAISIAAVIY) traverse the membrane as a helical segment. The Extracellular segment spans residues 479-484 (MAKTNG). Residues 485-505 (FIGIWIALTIYMALRAITGIA) traverse the membrane as a helical segment. Over 506–526 (RMATGTGPWRFLRGRSSSSSS) the chain is Cytoplasmic.

Belongs to the multi antimicrobial extrusion (MATE) (TC 2.A.66.1) family. In terms of tissue distribution, expressed in roots in the pericycle and cells internal to the pericycle and surrounding the vascular tissue. Also expressed in seed and flower.

The protein resides in the cell membrane. Its function is as follows. Citrate transporter responsible for loading citrate into xylem tissues, which helps facilitate iron transport to shoots. Mediates the citrate release in the apoplastic spaces during plant development allowing iron nutrition between symplastically disconnected tissues. This Arabidopsis thaliana (Mouse-ear cress) protein is Protein DETOXIFICATION 43.